Reading from the N-terminus, the 61-residue chain is Putative defensin-like protein 72 (61 aa).

4 disulfides stabilise this stretch: C21–C59, C25–C48, C34–C57, and C38–C58.

It belongs to the DEFL family.

The polypeptide is Putative defensin-like protein 72 (Arabidopsis thaliana (Mouse-ear cress)).